A 481-amino-acid chain; its full sequence is Surface lipoprotein assembly modifier 1 (481 aa).

A signal peptide spans 1 to 23 (MSIQTKFILFLSSSLFLTPYSVA). The tract at residues 25–192 (EKSPQPHDGR…QYLSALNQRD (168 aa)) is N-terminal domain. Positions 193-481 (QWKIQGGFSF…RIYVEISKTF (289 aa)) are C-terminal probable beta barrel. A run of 14 beta stranded transmembrane segments spans residues 194–204 (WKIQGGFSFLN), 233–243 (SYFGNAEKKWS), 248–258 (HFTKLSLEGSG), 271–281 (NARAGVGLGYQ), 285–295 (FELSLMPFTEK), 315–325 (SGARLDLSNWL), 329–338 (WQISTALEYG), 353–363 (YLASATLLYLA), 368–377 (YWFGGADYNR), 390–400 (KNVRLGWGQEW), 405–414 (STRLILNYAR), 432–441 (YASVLTIWHR), 448–458 (ITPKLSWSYQK), and 471–481 (NRIYVEISKTF).

Belongs to the Slam family.

Its subcellular location is the cell outer membrane. Its function is as follows. Required for correct export to the cell surface of some cell outer membrane lipoproteins. In Haemophilus influenzae (strain ATCC 51907 / DSM 11121 / KW20 / Rd), this protein is Surface lipoprotein assembly modifier 1.